The following is a 189-amino-acid chain: Elongation factor P (189 aa).

It belongs to the elongation factor P family.

Its subcellular location is the cytoplasm. It functions in the pathway protein biosynthesis; polypeptide chain elongation. In terms of biological role, involved in peptide bond synthesis. Stimulates efficient translation and peptide-bond synthesis on native or reconstituted 70S ribosomes in vitro. Probably functions indirectly by altering the affinity of the ribosome for aminoacyl-tRNA, thus increasing their reactivity as acceptors for peptidyl transferase. The sequence is that of Elongation factor P from Xanthobacter autotrophicus (strain ATCC BAA-1158 / Py2).